The following is an 831-amino-acid chain: Translation initiation factor IF-2 (831 aa).

The span at 1–11 (MADEIKKENAP) shows a compositional bias: basic and acidic residues. Residues 1–236 (MADEIKKENA…GKHAKKASAL (236 aa)) form a disordered region. Residues 22–31 (TTVSGTSTTG) show a composition bias toward low complexity. 2 stretches are compositionally biased toward basic and acidic residues: residues 49-150 (DLER…RYAD) and 157-166 (DNGKLDDYSD). Residues 190–200 (RSKNKVVKAKK) show a composition bias toward basic residues. A compositionally biased stretch (basic and acidic residues) spans 201-225 (GGRDDENGNKNERQSDRRNQKDVKG). A tr-type G domain is found at 330 to 500 (HRAPVVTIMG…LLQSEVLELT (171 aa)). The G1 stretch occupies residues 339-346 (GHVDHGKT). A GTP-binding site is contributed by 339 to 346 (GHVDHGKT). The interval 364–368 (GITQH) is G2. A G3 region spans residues 386-389 (DTPG). GTP is bound by residues 386 to 390 (DTPGH) and 440 to 443 (NKID). The interval 440-443 (NKID) is G4. Positions 476–478 (SAK) are G5.

Belongs to the TRAFAC class translation factor GTPase superfamily. Classic translation factor GTPase family. IF-2 subfamily.

The protein resides in the cytoplasm. One of the essential components for the initiation of protein synthesis. Protects formylmethionyl-tRNA from spontaneous hydrolysis and promotes its binding to the 30S ribosomal subunits. Also involved in the hydrolysis of GTP during the formation of the 70S ribosomal complex. This Histophilus somni (strain 2336) (Haemophilus somnus) protein is Translation initiation factor IF-2.